The chain runs to 493 residues: Xaa-Pro dipeptidase (493 aa).

Residue A2 is modified to N-acetylalanine. Residue S167 is modified to Phosphoserine. H255 serves as a coordination point for a dipeptide. Positions 276, 287, and 370 each coordinate Mn(2+). D287 is a binding site for a dipeptide. A dipeptide-binding residues include H377 and R398. Positions 412 and 452 each coordinate Mn(2+).

It belongs to the peptidase M24B family. Eukaryotic-type prolidase subfamily. As to quaternary structure, homodimer. Mn(2+) serves as cofactor.

It catalyses the reaction Xaa-L-Pro dipeptide + H2O = an L-alpha-amino acid + L-proline. In terms of biological role, dipeptidase that catalyzes the hydrolysis of dipeptides with a prolyl (Xaa-Pro) or hydroxyprolyl residue in the C-terminal position. The preferred dipeptide substrate is Gly-Pro, but other Xaa-Pro dipeptides, such as Ala-Pro, Met-Pro, Phe-Pro, Val-Pro and Leu-Pro, can be cleaved. Plays an important role in collagen metabolism because the high level of iminoacids in collagen. This Pongo abelii (Sumatran orangutan) protein is Xaa-Pro dipeptidase (PEPD).